Consider the following 468-residue polypeptide: Aspartate ammonia-lyase (468 aa).

Residues T99, S138, T139, N140, and T185 each coordinate L-aspartate. Residues 315–324 (GSSIMPGKVN) are SS loop. S316 functions as the Proton acceptor in the catalytic mechanism. L-aspartate-binding residues include S317 and K322.

The protein belongs to the class-II fumarase/aspartase family. Aspartase subfamily. In terms of assembly, homotetramer.

The catalysed reaction is L-aspartate = fumarate + NH4(+). Its function is as follows. Catalyzes the reversible conversion of L-aspartate to fumarate and ammonia. In Helicobacter pylori (strain ATCC 700392 / 26695) (Campylobacter pylori), this protein is Aspartate ammonia-lyase (aspA).